We begin with the raw amino-acid sequence, 252 residues long: MRKKVIAGNWKMNKVLSEAGEFMNSVVPKAPKGNDVEAIVCAPFPFLSKLVEQAKGSEVKVAAQNMHFEDSGAFTGEVSPVMLKDLGVTHVVLGHSERRELFAETNELVNKKTKAAFAHDLTPIVCVGETLDQREANETMNIVGEQVKQAVAGLTNEQVAETIIAYEPVWAIGTGKTATSEQANEVCTEIRKVVAEVTSADVAEKVIIQYGGSVKPANVDELLAQSDIDGALVGGASLDPESFLQLVEAGTK.

A substrate-binding site is contributed by 9–11 (NWK). The active-site Electrophile is the His95. Glu167 serves as the catalytic Proton acceptor. Residues Gly173, Ser213, and 234 to 235 (GG) contribute to the substrate site. The residue at position 213 (Ser213) is a Phosphoserine.

The protein belongs to the triosephosphate isomerase family. As to quaternary structure, homodimer.

Its subcellular location is the cytoplasm. The catalysed reaction is D-glyceraldehyde 3-phosphate = dihydroxyacetone phosphate. It participates in carbohydrate biosynthesis; gluconeogenesis. The protein operates within carbohydrate degradation; glycolysis; D-glyceraldehyde 3-phosphate from glycerone phosphate: step 1/1. Involved in the gluconeogenesis. Catalyzes stereospecifically the conversion of dihydroxyacetone phosphate (DHAP) to D-glyceraldehyde-3-phosphate (G3P). This chain is Triosephosphate isomerase, found in Oceanobacillus iheyensis (strain DSM 14371 / CIP 107618 / JCM 11309 / KCTC 3954 / HTE831).